The following is a 101-amino-acid chain: Protein Tat (101 aa).

Residues 1-24 are interaction with human CREBBP; it reads MEPVDPNREPWNHPGSQPKTACTN. The tract at residues 1–48 is transactivation; sequence MEPVDPNREPWNHPGSQPKTACTNCYCKKCCYHCQVCFLQKGLGISYG. Residues Cys-22, Cys-25, and Cys-27 each coordinate Zn(2+). The segment at 22–37 is cysteine-rich; sequence CTNCYCKKCCYHCQVC. Lys-28 is modified (N6-acetyllysine; by host PCAF). Cys-30, His-33, Cys-34, and Cys-37 together coordinate Zn(2+). Residues 38 to 48 are core; sequence FLQKGLGISYG. A disordered region spans residues 48 to 101; sequence GRKKRRQRRSAPPGSKTHQDLIPKQPLSQTQRKPTGPEESKKEVESKAEPDRFD. Positions 49–57 match the Nuclear localization signal, RNA-binding (TAR), and protein transduction motif; the sequence is RKKRRQRRS. The interval 49–86 is interaction with the host capping enzyme RNGTT; sequence RKKRRQRRSAPPGSKTHQDLIPKQPLSQTQRKPTGPEE. N6-acetyllysine; by host EP300 and GCN5L2 is present on residues Lys-50 and Lys-51. An asymmetric dimethylarginine; by host PRMT6 mark is found at Arg-52 and Arg-53. Residue Lys-71 forms a Glycyl lysine isopeptide (Lys-Gly) (interchain with G-Cter in ubiquitin) linkage. Residues 82–101 are compositionally biased toward basic and acidic residues; that stretch reads TGPEESKKEVESKAEPDRFD.

The protein belongs to the lentiviruses Tat family. In terms of assembly, interacts with host CCNT1. Associates with the P-TEFb complex composed at least of Tat, P-TEFb (CDK9 and CCNT1), TAR RNA, RNA Pol II. Recruits the HATs CREBBP, TAF1/TFIID, EP300, PCAF and GCN5L2. Interacts with host KAT5/Tip60; this interaction targets the latter to degradation. Interacts with the host deacetylase SIRT1. Interacts with host capping enzyme RNGTT; this interaction stimulates RNGTT. Binds to host KDR, and to the host integrins ITGAV/ITGB3 and ITGA5/ITGB1. Interacts with host KPNB1/importin beta-1 without previous binding to KPNA1/importin alpha-1. Interacts with EIF2AK2. Interacts with host nucleosome assembly protein NAP1L1; this interaction may be required for the transport of Tat within the nucleus, since the two proteins interact at the nuclear rim. Interacts with host C1QBP/SF2P32; this interaction involves lysine-acetylated Tat. Interacts with the host chemokine receptors CCR2, CCR3 and CXCR4. Interacts with host DPP4/CD26; this interaction may trigger an anti-proliferative effect. Interacts with host LDLR. Interacts with the host extracellular matrix metalloproteinase MMP1. Interacts with host PRMT6; this interaction mediates Tat's methylation. Interacts with, and is ubiquitinated by MDM2/Hdm2. Interacts with host PSMC3 and HTATIP2. Interacts with STAB1; this interaction may overcome SATB1-mediated repression of IL2 and IL2RA (interleukin) in T cells by binding to the same domain than HDAC1. Interacts (when acetylated) with human CDK13, thereby increasing HIV-1 mRNA splicing and promoting the production of the doubly spliced HIV-1 protein Nef. Interacts with host TBP; this interaction modulates the activity of transcriptional pre-initiation complex. Interacts with host RELA. Interacts with host PLSCR1; this interaction negatively regulates Tat transactivation activity by altering its subcellular distribution. In terms of processing, asymmetrical arginine methylation by host PRMT6 seems to diminish the transactivation capacity of Tat and affects the interaction with host CCNT1. Post-translationally, acetylation by EP300, CREBBP, GCN5L2/GCN5 and PCAF regulates the transactivation activity of Tat. EP300-mediated acetylation of Lys-50 promotes dissociation of Tat from the TAR RNA through the competitive binding to PCAF's bromodomain. In addition, the non-acetylated Tat's N-terminus can also interact with PCAF. PCAF-mediated acetylation of Lys-28 enhances Tat's binding to CCNT1. Lys-50 is deacetylated by SIRT1. Polyubiquitination by host MDM2 does not target Tat to degradation, but activates its transactivation function and fosters interaction with CCNT1 and TAR RNA. In terms of processing, phosphorylated by EIF2AK2 on serine and threonine residues adjacent to the basic region important for TAR RNA binding and function. Phosphorylation of Tat by EIF2AK2 is dependent on the prior activation of EIF2AK2 by dsRNA.

The protein resides in the host nucleus. It is found in the host nucleolus. Its subcellular location is the host cytoplasm. The protein localises to the secreted. Its function is as follows. Transcriptional activator that increases RNA Pol II processivity, thereby increasing the level of full-length viral transcripts. Recognizes a hairpin structure at the 5'-LTR of the nascent viral mRNAs referred to as the transactivation responsive RNA element (TAR) and recruits the cyclin T1-CDK9 complex (P-TEFb complex) that will in turn hyperphosphorylate the RNA polymerase II to allow efficient elongation. The CDK9 component of P-TEFb and other Tat-activated kinases hyperphosphorylate the C-terminus of RNA Pol II that becomes stabilized and much more processive. Other factors such as HTATSF1/Tat-SF1, SUPT5H/SPT5, and HTATIP2 are also important for Tat's function. Besides its effect on RNA Pol II processivity, Tat induces chromatin remodeling of proviral genes by recruiting the histone acetyltransferases (HATs) CREBBP, EP300 and PCAF to the chromatin. This also contributes to the increase in proviral transcription rate, especially when the provirus integrates in transcriptionally silent region of the host genome. To ensure maximal activation of the LTR, Tat mediates nuclear translocation of NF-kappa-B by interacting with host RELA. Through its interaction with host TBP, Tat may also modulate transcription initiation. Tat can reactivate a latently infected cell by penetrating in it and transactivating its LTR promoter. In the cytoplasm, Tat is thought to act as a translational activator of HIV-1 mRNAs. Extracellular circulating Tat can be endocytosed by surrounding uninfected cells via the binding to several surface receptors such as CD26, CXCR4, heparan sulfate proteoglycans (HSPG) or LDLR. Neurons are rarely infected, but they internalize Tat via their LDLR. Through its interaction with nuclear HATs, Tat is potentially able to control the acetylation-dependent cellular gene expression. Modulates the expression of many cellular genes involved in cell survival, proliferation or in coding for cytokines or cytokine receptors. Tat plays a role in T-cell and neurons apoptosis. Tat induced neurotoxicity and apoptosis probably contribute to neuroAIDS. Circulating Tat also acts as a chemokine-like and/or growth factor-like molecule that binds to specific receptors on the surface of the cells, affecting many cellular pathways. In the vascular system, Tat binds to ITGAV/ITGB3 and ITGA5/ITGB1 integrins dimers at the surface of endothelial cells and competes with bFGF for heparin-binding sites, leading to an excess of soluble bFGF. This is Protein Tat from Homo sapiens (Human).